The following is a 338-amino-acid chain: Malate dehydrogenase, mitochondrial (338 aa).

The transit peptide at 1–24 (MLSALARPASAALRRSFSTSAQNN) directs the protein to the mitochondrion. Residues 31-37 (GASGGIG) and D57 contribute to the NAD(+) site. The O-linked (GlcNAc) serine glycan is linked to S33. N6-acetyllysine; alternate is present on residues K78 and K91. 2 positions are modified to N6-succinyllysine; alternate: K78 and K91. Substrate-binding residues include R104 and R110. NAD(+) is bound by residues N117 and 140–142 (IAN). Residue N142 coordinates substrate. An N6-acetyllysine modification is found at K165. R176 contacts substrate. Position 185 is an N6-acetyllysine; alternate (K185). K185 carries the N6-succinyllysine; alternate modification. Residue H200 is the Proton acceptor of the active site. Residue K203 is modified to N6-succinyllysine. N6-acetyllysine; alternate occurs at positions 215 and 239. N6-succinyllysine; alternate is present on residues K215 and K239. An N6-malonyllysine; alternate modification is found at K239. Phosphoserine is present on S246. M251 contributes to the NAD(+) binding site. The residue at position 269 (K269) is an N6-succinyllysine. N6-acetyllysine; alternate occurs at positions 296, 301, 314, and 324. An N6-succinyllysine; alternate mark is found at K296, K301, K314, and K324. At S326 the chain carries Phosphoserine. K328, K329, and K335 each carry N6-acetyllysine; alternate. K328 bears the N6-succinyllysine; alternate mark. K329 is modified (N6-malonyllysine; alternate). Position 335 is an N6-succinyllysine; alternate (K335).

Belongs to the LDH/MDH superfamily. MDH type 1 family. In terms of assembly, homodimer. Acetylation is enhanced after treatment either with trichostin A (TCA) or with nicotinamide (NAM) with the appearance of tri- and tetraacetylations. Glucose also increases acetylation.

The protein resides in the mitochondrion matrix. It catalyses the reaction (S)-malate + NAD(+) = oxaloacetate + NADH + H(+). Its activity is regulated as follows. Enzyme activity is enhanced by acetylation. This is Malate dehydrogenase, mitochondrial (MDH2) from Macaca fascicularis (Crab-eating macaque).